A 415-amino-acid chain; its full sequence is MMAQLQFRDAFWCRDFTAHTGYEVLLQRLLDGRKMCKDVEELLRQRAQAEERYGKELVQIARKAGGQTEMNSLRTSFDSLKQQTENVGSAHIQLALALREELRSLEEFRERQKEQRKKYEAIMDRVQKSKLSLYKKTMESKKAYDQKCRDADDAEQAFERVSANGHQKQVEKSQNKAKQCKESATEAERVYRQNIEQLERARTEWEQEHRTTCEAFQLQEFDRLTILRNALWVHCNQLSMQCVKDDELYEEVRLTLEGCDVEGDINGFIQSKSTGREPPAPVPYQNYYDREVTPLIGSPSIQPSCGVIKRFSGLLHGSPKTTPSAPAASTETLTPTPERNELVYASIEVQATQGNLNSSAQDYRALYDYTAQNSDELDISAGDILAVILEGEDGWWTVERNGQRGFVPGSYLEKL.

In terms of domain architecture, F-BAR spans Leu5–Asp264. 2 coiled-coil regions span residues Leu94–Leu133 and Ser162–Ala215. The residue at position 318 (Ser318) is a Phosphoserine. Tyr344 is modified (phosphotyrosine; by ABL1). Residues Ser358–Leu415 enclose the SH3 domain.

Homodimer. Homotrimer. Interacts (via coiled-coil domain) with CD2AP, PTPN12 and PTPN18. Interacts (via SH3 domain) with ABL1 and WAS. Interacts (via SH3 and coiled-coil domains) with MEFV (via B-box zinc finger); the interaction allows binding of MEFV to PYCARD and facilitates formation of PYCARD pyroptosomes. Interacts with DNM2 and FASLG. Interacts with CD2. In terms of processing, dephosphorylated on Tyr-344 by PTPN18, this event negatively regulates the association of PSTPIP1 with SH2 domain-containing proteins as tyrosine kinase. Phosphorylation of Tyr-344 is probably required for subsequent phosphorylation at other tyrosine residues. Phosphorylation is induced by activation of the EGFR and PDGFR in a ABL1 dependent manner. The phosphorylation regulates the interaction with WAS and with MEFV. In terms of tissue distribution, highly expressed in adult lung and spleen, and weakly expressed in testis, muscle, kidney, brain and heart. Highly expressed in spleen and thymus, moderately in lung, brain and muscle, and weakly expressed in heart and liver (at protein level).

It is found in the cytoplasm. The protein localises to the perinuclear region. The protein resides in the cell projection. Its subcellular location is the lamellipodium. It localises to the cleavage furrow. It is found in the cytoskeleton. The protein localises to the cell membrane. The protein resides in the uropodium. Involved in regulation of the actin cytoskeleton. May regulate WAS actin-bundling activity. Bridges the interaction between ABL1 and PTPN18 leading to ABL1 dephosphorylation. May play a role as a scaffold protein between PTPN12 and WAS and allow PTPN12 to dephosphorylate WAS. Has the potential to physically couple CD2 and CD2AP to WAS. Acts downstream of CD2 and CD2AP to recruit WAS to the T-cell:APC contact site so as to promote the actin polymerization required for synapse induction during T-cell activation. Down-regulates CD2-stimulated adhesion through the coupling of PTPN12 to CD2. Also has a role in innate immunity and the inflammatory response. Recruited to inflammasomes by MEFV. Induces formation of pyroptosomes, large supramolecular structures composed of oligomerized PYCARD dimers which form prior to inflammatory apoptosis. Binding to MEFV allows MEFV to bind to PYCARD and facilitates pyroptosome formation. Regulates endocytosis and cell migration in neutrophils. This chain is Proline-serine-threonine phosphatase-interacting protein 1 (Pstpip1), found in Mus musculus (Mouse).